The following is a 128-amino-acid chain: Large ribosomal subunit protein bL12 (128 aa).

This sequence belongs to the bacterial ribosomal protein bL12 family. Homodimer. Part of the ribosomal stalk of the 50S ribosomal subunit. Forms a multimeric L10(L12)X complex, where L10 forms an elongated spine to which 2 to 4 L12 dimers bind in a sequential fashion. Binds GTP-bound translation factors.

In terms of biological role, forms part of the ribosomal stalk which helps the ribosome interact with GTP-bound translation factors. Is thus essential for accurate translation. This is Large ribosomal subunit protein bL12 from Sorangium cellulosum (strain So ce56) (Polyangium cellulosum (strain So ce56)).